A 184-amino-acid polypeptide reads, in one-letter code: MSKIGNRSIKIDPSKVSLMQTTTLLTIKGPLGENTIKLPKNLPLKFVVENDTIKVTNNNNLKQTKILHGTFNALVNNAVIGVTKGFEKKLILVGVGYRANVEGQFLNLQLGYSHPIKELIPNQLTVKVEKNTEITISGIKKELVGQFATEIRKWRKPEPYKGKGVLYFNEVIVRKQGKTAEGKK.

It belongs to the universal ribosomal protein uL6 family. In terms of assembly, part of the 50S ribosomal subunit.

Its function is as follows. This protein binds to the 23S rRNA, and is important in its secondary structure. It is located near the subunit interface in the base of the L7/L12 stalk, and near the tRNA binding site of the peptidyltransferase center. The polypeptide is Large ribosomal subunit protein uL6 (Mycoplasma genitalium (strain ATCC 33530 / DSM 19775 / NCTC 10195 / G37) (Mycoplasmoides genitalium)).